The chain runs to 290 residues: Small ribosomal subunit biogenesis GTPase RsgA (290 aa).

The CP-type G domain maps to 62–213 (KNSLVRPPIV…IADTPGFSSL (152 aa)). GTP contacts are provided by residues 111–114 (SKMD) and 156–164 (GQTGVGKST). Cys-237, Cys-242, His-244, and Cys-250 together coordinate Zn(2+).

Belongs to the TRAFAC class YlqF/YawG GTPase family. RsgA subfamily. Monomer. Associates with 30S ribosomal subunit, binds 16S rRNA. Zn(2+) is required as a cofactor.

It localises to the cytoplasm. Its function is as follows. One of several proteins that assist in the late maturation steps of the functional core of the 30S ribosomal subunit. Helps release RbfA from mature subunits. May play a role in the assembly of ribosomal proteins into the subunit. Circularly permuted GTPase that catalyzes slow GTP hydrolysis, GTPase activity is stimulated by the 30S ribosomal subunit. The sequence is that of Small ribosomal subunit biogenesis GTPase RsgA from Streptococcus pyogenes serotype M6 (strain ATCC BAA-946 / MGAS10394).